We begin with the raw amino-acid sequence, 125 residues long: Unclassified hydrophobin 8 (125 aa).

An N-terminal signal peptide occupies residues 1–20 (MMFSKPVVLATTALATFAAA). Cystine bridges form between cysteine 31/cysteine 105, cysteine 38/cysteine 99, cysteine 39/cysteine 90, and cysteine 106/cysteine 119.

This sequence belongs to the fungal hydrophobin family. Self-assembles to form functional amyloid fibrils called rodlets. Self-assembly into fibrillar rodlets occurs spontaneously at hydrophobic:hydrophilic interfaces and the rodlets further associate laterally to form amphipathic monolayers.

The protein localises to the secreted. The protein resides in the cell wall. Aerial growth, conidiation, and dispersal of filamentous fungi in the environment rely upon a capability of their secreting small amphipathic proteins called hydrophobins (HPBs) with low sequence identity. Class I can self-assemble into an outermost layer of rodlet bundles on aerial cell surfaces, conferring cellular hydrophobicity that supports fungal growth, development and dispersal; whereas Class II form highly ordered films at water-air interfaces through intermolecular interactions but contribute nothing to the rodlet structure. Hydph8 is an unclassified hydrophobin involved in mycelial growth. The sequence is that of Unclassified hydrophobin 8 from Pleurotus ostreatus (strain PC15) (Oyster mushroom).